We begin with the raw amino-acid sequence, 187 residues long: Elongation factor P 1 (187 aa).

The protein belongs to the elongation factor P family.

Its subcellular location is the cytoplasm. It functions in the pathway protein biosynthesis; polypeptide chain elongation. Functionally, involved in peptide bond synthesis. Stimulates efficient translation and peptide-bond synthesis on native or reconstituted 70S ribosomes in vitro. Probably functions indirectly by altering the affinity of the ribosome for aminoacyl-tRNA, thus increasing their reactivity as acceptors for peptidyl transferase. The protein is Elongation factor P 1 of Geobacter sulfurreducens (strain ATCC 51573 / DSM 12127 / PCA).